The sequence spans 535 residues: uncharacterized protein (535 aa).

The helical transmembrane segment at 8-24 threads the bilayer; that stretch reads LVVFGSLVFFFGLVKYF. Residue lysine 50 forms a Glycyl lysine isopeptide (Lys-Gly) (interchain with G-Cter in ubiquitin) linkage. Mn(2+) is bound by residues aspartate 316, aspartate 327, histidine 412, glutamate 452, and glutamate 493.

The protein belongs to the peptidase M24B family. Mn(2+) is required as a cofactor.

It localises to the membrane. This is an uncharacterized protein from Saccharomyces cerevisiae (strain ATCC 204508 / S288c) (Baker's yeast).